We begin with the raw amino-acid sequence, 950 residues long: Kinase suppressor of Ras 2 (950 aa).

The tract at residues P239–R296 is disordered. Residues R259–P273 are compositionally biased toward low complexity. 2 positions are modified to phosphothreonine: T272 and T276. The segment at K412–C456 adopts a Phorbol-ester/DAG-type zinc-finger fold. Zn(2+)-binding residues include H413, C425, C428, C438, C441, H446, C449, and C456. A Phosphoserine; by MARK3 modification is found at S474. Residue T497 is modified to Phosphothreonine. A disordered region spans residues L498–Q556. Low complexity predominate over residues S517 to S530. The span at S531–P548 shows a compositional bias: pro residues. The Protein kinase domain maps to L666–L931. An ATP-binding site is contributed by I672–V680. Residue D786 is the Proton donor/acceptor of the active site. ATP is bound by residues K788 and D803.

Belongs to the protein kinase superfamily. TKL Ser/Thr protein kinase family. As to quaternary structure, heterodimerizes (via N-terminus) with BRAF (via N-terminus) in a MAP2K1/MEK1-dependent manner. Interacts with BRAF; this increases the low intrinsic protein kinase activity of KSR2. Interacts with MAP2K1, forming a heterodimer that can dimerize to form a heterotetramer. Interacts with MAP3K8, MAPK, RAS and RAF. In terms of processing, phosphorylated on Ser-474 by MARK3. As to expression, mainly expressed in brain and kidney.

It localises to the cytoplasm. The protein resides in the membrane. It carries out the reaction L-seryl-[protein] + ATP = O-phospho-L-seryl-[protein] + ADP + H(+). It catalyses the reaction L-threonyl-[protein] + ATP = O-phospho-L-threonyl-[protein] + ADP + H(+). Kinase activity is inhibited by ASC24. Functionally, location-regulated scaffold connecting MEK to RAF. Has very low protein kinase activity and can phosphorylate MAP2K1 at several Ser and Thr residues with very low efficiency (in vitro). Acts as MAP2K1/MEK1-dependent allosteric activator of BRAF; upon binding to MAP2K1/MEK1, dimerizes with BRAF and promotes BRAF-mediated phosphorylation of MAP2K1/MEK1. Interaction with BRAF enhances KSR2-mediated phosphorylation of MAP2K1 (in vitro). Blocks MAP3K8 kinase activity and MAP3K8-mediated signaling. Acts as a negative regulator of MAP3K3-mediated activation of ERK, JNK and NF-kappa-B pathways, inhibiting MAP3K3-mediated interleukin-8 production. This is Kinase suppressor of Ras 2 from Homo sapiens (Human).